A 255-amino-acid polypeptide reads, in one-letter code: Pimeloyl-[acyl-carrier protein] methyl ester esterase (255 aa).

Residues 16-242 (LVLLHGWGMN…SSHAPFITEP (227 aa)) form the AB hydrolase-1 domain. Substrate contacts are provided by residues Trp-22, 82 to 83 (SL), and 143 to 147 (FMALQ). The active-site Nucleophile is Ser-82. Residues Asp-207 and His-235 contribute to the active site. His-235 is a binding site for substrate.

It belongs to the AB hydrolase superfamily. Carboxylesterase BioH family. As to quaternary structure, monomer.

The protein resides in the cytoplasm. It carries out the reaction 6-carboxyhexanoyl-[ACP] methyl ester + H2O = 6-carboxyhexanoyl-[ACP] + methanol + H(+). The protein operates within cofactor biosynthesis; biotin biosynthesis. The physiological role of BioH is to remove the methyl group introduced by BioC when the pimeloyl moiety is complete. It allows to synthesize pimeloyl-ACP via the fatty acid synthetic pathway through the hydrolysis of the ester bonds of pimeloyl-ACP esters. In Vibrio vulnificus (strain YJ016), this protein is Pimeloyl-[acyl-carrier protein] methyl ester esterase.